The chain runs to 668 residues: COBRA-like protein 11 (668 aa).

Positions 1-29 (MKKLRYVHLNLLLLLLPLINLQFPTLSLA) are cleaved as a signal peptide. Asn-69, Asn-125, Asn-254, Asn-318, Asn-329, Asn-358, Asn-412, Asn-432, Asn-473, Asn-552, Asn-560, and Asn-579 each carry an N-linked (GlcNAc...) asparagine glycan. Ser-636 carries GPI-anchor amidated serine lipidation. A propeptide spans 637–668 (SGMRLSGIRFLPSILLAITTFHAITDRLLTGV) (removed in mature form).

This sequence belongs to the COBRA family. As to expression, mostly expressed in flowers, stamen, anthers and pollen, and, to a lower extent, possibly in roots, stems, leaves and siliques.

The protein localises to the cell membrane. Its function is as follows. Involved in the deposition of apical pectin cap and cellulose microfibrils in pollen tubes. Implicated in pollen tubes growth in the female transmitting tract of pistil and toward micropyles, via the perception of ovule guidance cues. The chain is COBRA-like protein 11 from Arabidopsis thaliana (Mouse-ear cress).